The sequence spans 639 residues: E3 ubiquitin-protein ligase HEL2 (639 aa).

Positions 1–55 are disordered; sequence MSESVKENVTPTRNFRRTQGPQNNTKPHNDRKNFRRKQKKNNLSAEPNLTTSSAD. N-acetylserine is present on Ser2. 2 stretches are compositionally biased toward polar residues: residues 7 to 26 and 43 to 54; these read ENVTPTRNFRRTQGPQNNTK and LSAEPNLTTSSA. Thr57 bears the Phosphothreonine mark. The RING-type zinc finger occupies 64-104; the sequence is CVICARKLTYVSLTPCHHKTCHICGFRQRALYNKKSCLICR. One can recognise an LIM zinc-binding domain in the interval 222 to 292; the sequence is PMCAFCSGKR…QTCLDNKFVV (71 aa). Positions 343-354 are enriched in low complexity; sequence SISSLPGSSSGS. Disordered stretches follow at residues 343-367 and 550-631; these read SISSLPGSSSGSRTDVRSASSPEES and LESK…GKQK. Ser354 carries the phosphoserine modification.

It belongs to the ZNF598/HEL2 family. In terms of assembly, interacts with the E2 ubiquitin-conjugating enzyme UBC4. Interacts with histones H3 and H4.

The protein localises to the cytoplasm. The enzyme catalyses S-ubiquitinyl-[E2 ubiquitin-conjugating enzyme]-L-cysteine + [acceptor protein]-L-lysine = [E2 ubiquitin-conjugating enzyme]-L-cysteine + N(6)-ubiquitinyl-[acceptor protein]-L-lysine.. It participates in protein modification; protein ubiquitination. Functionally, E3 ubiquitin-protein ligase that plays a key role in the ribosome quality control (RQC), a pathway that takes place when a ribosome has stalled during translation, leading to degradation of nascent peptide chains. HEL2 is activated when ribosomes are stalled within an mRNA following translation of prematurely polyadenylated mRNAs. Acts as a ribosome collision sensor: specifically recognizes and binds collided ribosome and ubiquitinates the 40S ribosomal proteins RPS20/uS10 and RPS3/uS3. Catalyzes 'Lys-63'-linked polyubiquitination of RPS20/uS10, promoting recruitment of the RQT (ribosome quality control trigger) complex, which drives the disassembly of stalled ribosomes, followed by degradation of nascent peptides. HEL2 also acts as an activator of the No-Go decay (NGD) pathway by mediating polyubiquitination of monoubiquitinated RPS3/uS3 and RPS7/es7: RPS3/uS3 and RPS7/es7 are first monoubiquitinated by MAG2 and MOT2/NOT4, respectively, and HEL2 mediates formation of 'Lys-63'-linked polyubiquitin chains on monoubiquitin, leading to activation of the NGD pathway in a CUE2-mediated endonucleolytic cleavage. Polyubiquitination of RPS3/uS3 also triggers degradation of non-functional 18S rRNA. The RQC pathway and the integrated stress response (ISR) antagonize each other: HEL2 prevents the activation of GCN2, while GCN2 suppresses RQC activation. The RQC pathway functions as a preventive quality control in the secretory pathway: HEL2 binds preferentially to the pre-engaged secretory ribosome-nascent chain complexes and prevents mistargeting of secretory proteins into mitochondria. Independently of its role in RQC, also involved in the polyubiquitination and proteasomal-degradation of excess histone proteins. This is E3 ubiquitin-protein ligase HEL2 from Saccharomyces cerevisiae (strain ATCC 204508 / S288c) (Baker's yeast).